Consider the following 161-residue polypeptide: Large ribosomal subunit protein uL10 (161 aa).

Belongs to the universal ribosomal protein uL10 family. In terms of assembly, part of the ribosomal stalk of the 50S ribosomal subunit. The N-terminus interacts with L11 and the large rRNA to form the base of the stalk. The C-terminus forms an elongated spine to which L12 dimers bind in a sequential fashion forming a multimeric L10(L12)X complex.

Its function is as follows. Forms part of the ribosomal stalk, playing a central role in the interaction of the ribosome with GTP-bound translation factors. The polypeptide is Large ribosomal subunit protein uL10 (Campylobacter curvus (strain 525.92)).